An 820-amino-acid polypeptide reads, in one-letter code: Probable protease Ga0182885_104520 (820 aa).

It belongs to the peptidase C25 family.

Probably a dedicated protease for substrate gasdermin bGSDM; cleaves the bGSDM precursor, releasing the pore-forming moiety, which integrates into the membrane and triggers cell death. Involved in defense against bacteriophages. Expression of bacterial gasdermin (bGSDM) and this neighboring protease is toxic in E.coli. The protein is Probable protease Ga0182885_104520 of Desulfuromonadales bacterium.